Reading from the N-terminus, the 402-residue chain is Zinc finger protein 809 (402 aa).

One can recognise a KRAB domain in the interval 4–75 (VSFEDVAVDF…AEASSRSLPG (72 aa)). The tract at residues 118-139 (QEVSKGTTSRHRRAPVKSLCRK) is disordered. The span at 125 to 139 (TSRHRRAPVKSLCRK) shows a compositional bias: basic residues. 7 consecutive C2H2-type zinc fingers follow at residues 155 to 178 (YECKDCEKVFCNNSTLIKHYRRTH), 184 to 206 (YECDECSKMYYWKSDLTSHQKTH), 213 to 235 (YECSECGKAFFRKSHLNAHERTH), 241 to 263 (YECTECRKAFYYKSDLTRHKKTH), 269 to 291 (FKCEECKKAFSRKSKLAIHQKKH), 297 to 319 (YECTECKKAFSHQSQLTAHRIAH), and 325 to 347 (YECKECNKSFHWKCQLTAHQKRH).

It belongs to the krueppel C2H2-type zinc-finger protein family.

The protein resides in the nucleus. Functionally, transcription factor specifically required to repress retrotransposons in embryonic stem cells. Recognizes and binds retroviral DNA sequences from a large subset of mammalian retroviruses and retroelements and repress their expression by recruiting a repressive complex containing TRIM28/KAP1. The chain is Zinc finger protein 809 from Mus musculus (Mouse).